The chain runs to 78 residues: Omega-conotoxin-like 12 (78 aa).

Positions 1–22 (MKLTCVVIVAVLLLTACQLITA) are cleaved as a signal peptide. Positions 23–42 (DDSRGTQKHRSLRSTTKVSK) are excised as a propeptide. 3 cysteine pairs are disulfide-bonded: cysteine 46-cysteine 62, cysteine 53-cysteine 65, and cysteine 61-cysteine 72.

This sequence belongs to the conotoxin O1 superfamily. As to expression, expressed by the venom duct.

It localises to the secreted. Functionally, omega-conotoxins act at presynaptic membranes, they bind and block voltage-gated calcium channels (Cav). The protein is Omega-conotoxin-like 12 of Conus striatus (Striated cone).